The chain runs to 1296 residues: DNA-directed RNA polymerase subunit beta' (1296 aa).

4 residues coordinate Zn(2+): C60, C62, C75, and C78. Residues 188–209 are disordered; it reads GAKGDARRKVRESAEREMRQIR. Residues D535, D537, and D539 each contribute to the Mg(2+) site. Residues C877, C954, C961, and C964 each coordinate Zn(2+).

It belongs to the RNA polymerase beta' chain family. In terms of assembly, the RNAP catalytic core consists of 2 alpha, 1 beta, 1 beta' and 1 omega subunit. When a sigma factor is associated with the core the holoenzyme is formed, which can initiate transcription. The cofactor is Mg(2+). Zn(2+) serves as cofactor.

It carries out the reaction RNA(n) + a ribonucleoside 5'-triphosphate = RNA(n+1) + diphosphate. Functionally, DNA-dependent RNA polymerase catalyzes the transcription of DNA into RNA using the four ribonucleoside triphosphates as substrates. The polypeptide is DNA-directed RNA polymerase subunit beta' (Parafrankia sp. (strain EAN1pec)).